Consider the following 678-residue polypeptide: MTPNEFFSIKYHILAKAELKAYIDKLADYLSQQSYLYHTLDKPIISDSDYDKLFRLLQDLVNDNPQFKPINSVLDRVGGEVLAGFETIKHKKKMTSLANVFSLEELRDFYDKIEYDIELECEPKMDGLAISIFYKNGKFDYAVTRGDGIQGEKVSENVKTIRNVPLKLNTSNPPEELEVRGEIILDKQSFLSLNEYMQTHENKTFANPRNAAAGSIRMLDSKVVAKRPLKLYSYGIGYFSKDFVYPETQFELMQLLQSFGFTISDNMFLAKNFSEVEEYHHKMSHQRADLAYDIDGLVFKVNNIKLQDTIGYTARGPKWAIAYKFPAEEVESEVLNVEFQVGRTGAITPVARLKPVAVGGVIVSNATLHNINEIKSKDIRVGDRVIVRRAGDVIPEVVKSLPQYRKSDAQIVEMPTNCPVCDSKIENVNDQAIYRCTGGWHCQAQTTERLKHFVSRKAMDIDKLGAKLIEQLVAANLIKYPADIYKLNFEQLTGLERMAAKSSQNVLDSITKSKEPSLARFIFAIGIKDIGEVSSDALANHFGSLESFRDAKFEELIEINYVGEIIANNIVSFWHDSLNIKIVEEFLAIGIKIQNPVKVEHAYNESFTGKTVVITGSFENYGRTELTQLLKSIGAKVTSSVSKKTDMVICGDNAGSKLTKAQELGVEVILEDNLKDLL.

NAD(+)-binding positions include 47 to 51 (DSDYD), 96 to 97 (SL), and E122. K124 functions as the N6-AMP-lysine intermediate in the catalytic mechanism. R145, E182, K300, and K324 together coordinate NAD(+). Residues C418, C421, C436, and C442 each contribute to the Zn(2+) site. The BRCT domain occupies 602-678 (AYNESFTGKT…ILEDNLKDLL (77 aa)).

This sequence belongs to the NAD-dependent DNA ligase family. LigA subfamily. Mg(2+) is required as a cofactor. Mn(2+) serves as cofactor.

It carries out the reaction NAD(+) + (deoxyribonucleotide)n-3'-hydroxyl + 5'-phospho-(deoxyribonucleotide)m = (deoxyribonucleotide)n+m + AMP + beta-nicotinamide D-nucleotide.. In terms of biological role, DNA ligase that catalyzes the formation of phosphodiester linkages between 5'-phosphoryl and 3'-hydroxyl groups in double-stranded DNA using NAD as a coenzyme and as the energy source for the reaction. It is essential for DNA replication and repair of damaged DNA. The protein is DNA ligase of Francisella tularensis subsp. holarctica (strain OSU18).